The sequence spans 235 residues: DnaA regulatory inactivator Hda (235 aa).

This sequence belongs to the DnaA family. HdA subfamily. In terms of assembly, the active form seems to be an ADP-bound monomer. Forms the RIDA complex (regulatory inactivation of DnaA) of ATP-DnaA, ADP-Hda and the DNA-loaded beta sliding clamp (dnaN).

Its function is as follows. Mediates the interaction of DNA replication initiator protein DnaA with DNA polymerase subunit beta sliding clamp (dnaN). Stimulates hydrolysis of ATP-DnaA to ADP-DnaA, rendering DnaA inactive for reinitiation, a process called regulatory inhibition of DnaA or RIDA. This Yersinia pestis bv. Antiqua (strain Antiqua) protein is DnaA regulatory inactivator Hda.